Reading from the N-terminus, the 476-residue chain is Probable flippase AglR (476 aa).

14 helical membrane-spanning segments follow: residues A7 to V29, G34 to V56, V83 to V103, T112 to L132, A146 to V166, A168 to L188, W222 to V242, I246 to S266, V287 to L307, Y310 to V330, F354 to P373, V377 to V396, V409 to I429, and I439 to L459.

Belongs to the AglR/Agl15 family.

The protein resides in the cell membrane. Its pathway is cell surface structure biogenesis; S-layer biogenesis. Its function is as follows. Involved in the assembly of a N-linked pentasaccharide that decorates the S-layer glycoprotein and flagellins. Probably mediates or contributes to the translocation of the dolichol-phosphate-mannose across the membrane. This Haloferax volcanii (strain ATCC 29605 / DSM 3757 / JCM 8879 / NBRC 14742 / NCIMB 2012 / VKM B-1768 / DS2) (Halobacterium volcanii) protein is Probable flippase AglR (aglR).